Reading from the N-terminus, the 523-residue chain is Non-specific phospholipase C3 (523 aa).

The interval 44 to 64 is disordered; that stretch reads DGVSESEPRSNPLSTSDPNSA. Over residues 52 to 64 the composition is skewed to polar residues; that stretch reads RSNPLSTSDPNSA.

This sequence belongs to the bacterial phospholipase C family. As to expression, expressed in root tips, cotyledons, on leaf margins, stems, young anthers and funiculus.

It catalyses the reaction a 1-acyl-sn-glycero-3-phosphate + H2O = a 1-acyl-sn-glycerol + phosphate. Possesses specific phosphatase activity toward lysophosphatidic acid (LPA) in vitro. Does not show phospholipase C activity. May play a role in signal transduction and storage lipid synthesis. May be involved in brassinolide-mediated signaling in root development. This is Non-specific phospholipase C3 (NPC3) from Arabidopsis thaliana (Mouse-ear cress).